Reading from the N-terminus, the 430-residue chain is Agropine synthesis reductase (430 aa).

203–227 (LVSGSNRGVGKAIAEDLIAHGYRLS) is a binding site for NAD(+). Ser-333 provides a ligand contact to substrate. Tyr-346 serves as the catalytic Proton acceptor.

Belongs to the short-chain dehydrogenases/reductases (SDR) family.

Its pathway is opine metabolism; mannopine biosynthesis. In terms of biological role, reduces deoxy-fructosyl-glutamine to mannopine. This Rhizobium rhizogenes (Agrobacterium rhizogenes) protein is Agropine synthesis reductase (mas1).